The sequence spans 239 residues: Orotidine 5'-phosphate decarboxylase (239 aa).

Residues Asp-11, Lys-33, Asp-60–Thr-69, Thr-117, Arg-178, Gln-187, Gly-207, and Arg-208 each bind substrate. Lys-62 functions as the Proton donor in the catalytic mechanism.

It belongs to the OMP decarboxylase family. Type 1 subfamily. Homodimer.

It catalyses the reaction orotidine 5'-phosphate + H(+) = UMP + CO2. The protein operates within pyrimidine metabolism; UMP biosynthesis via de novo pathway; UMP from orotate: step 2/2. Functionally, catalyzes the decarboxylation of orotidine 5'-monophosphate (OMP) to uridine 5'-monophosphate (UMP). The polypeptide is Orotidine 5'-phosphate decarboxylase (Nitrosospira multiformis (strain ATCC 25196 / NCIMB 11849 / C 71)).